The sequence spans 697 residues: Gametogenetin-binding protein 2 (697 aa).

Ser360 is modified (phosphoserine).

As to quaternary structure, interacts with GGN. As to expression, expressed in heart, brain, placenta, lung, liver, skeletal muscle, kidney and pancreas. Expressed more abundantly in heart, pancreas and skeletal muscle.

It localises to the cytoplasmic vesicle. Functionally, may be involved in spermatogenesis. The protein is Gametogenetin-binding protein 2 (GGNBP2) of Homo sapiens (Human).